The primary structure comprises 670 residues: tRNA 5-methylaminomethyl-2-thiouridine biosynthesis bifunctional protein MnmC (670 aa).

Residues 1–242 (MTFSVQHAEI…KRECLSGLKI (242 aa)) form a tRNA (mnm(5)s(2)U34)-methyltransferase region. Positions 269–670 (IGGGIASFCA…KKWLKGSKVE (402 aa)) are FAD-dependent cmnm(5)s(2)U34 oxidoreductase.

This sequence in the N-terminal section; belongs to the methyltransferase superfamily. tRNA (mnm(5)s(2)U34)-methyltransferase family. The protein in the C-terminal section; belongs to the DAO family. Requires FAD as cofactor.

The protein localises to the cytoplasm. The catalysed reaction is 5-aminomethyl-2-thiouridine(34) in tRNA + S-adenosyl-L-methionine = 5-methylaminomethyl-2-thiouridine(34) in tRNA + S-adenosyl-L-homocysteine + H(+). Catalyzes the last two steps in the biosynthesis of 5-methylaminomethyl-2-thiouridine (mnm(5)s(2)U) at the wobble position (U34) in tRNA. Catalyzes the FAD-dependent demodification of cmnm(5)s(2)U34 to nm(5)s(2)U34, followed by the transfer of a methyl group from S-adenosyl-L-methionine to nm(5)s(2)U34, to form mnm(5)s(2)U34. This Haemophilus influenzae (strain 86-028NP) protein is tRNA 5-methylaminomethyl-2-thiouridine biosynthesis bifunctional protein MnmC.